The primary structure comprises 293 residues: MAMRQCAIYGKGGIGKSTTTQNLVAALAELGKKVMIVGCDPKADSTRLILHSKAQNTIMEMAAEAGTVEDLELEDVLKTGYGDIKCVESGGPEPGVGCAGRGVITAINFLEEEGAYEDDLDFVFYDVLGDVVCGGFAMPIRENKAQEIYVVCSGEMMAMYAANNICKGIVKYANSGSVRLGGLICNSRNTDREDELIMALADKLGSQMIHFVPRDNVVQRAEIRRMTVIEYDPAAKQADEYRTLAKKIVENKKLVIPTPISMDELEALLMEFGIMDEEDMTIVGKTAAEEVVA.

Position 10 to 17 (10 to 17) interacts with ATP; the sequence is GKGGIGKS. A [4Fe-4S] cluster-binding site is contributed by cysteine 98. Arginine 101 is subject to ADP-ribosylarginine; by dinitrogenase reductase ADP-ribosyltransferase. Cysteine 133 contacts [4Fe-4S] cluster.

It belongs to the NifH/BchL/ChlL family. Homodimer. [4Fe-4S] cluster serves as cofactor. The reversible ADP-ribosylation of Arg-101 inactivates the nitrogenase reductase and regulates nitrogenase activity.

The catalysed reaction is N2 + 8 reduced [2Fe-2S]-[ferredoxin] + 16 ATP + 16 H2O = H2 + 8 oxidized [2Fe-2S]-[ferredoxin] + 2 NH4(+) + 16 ADP + 16 phosphate + 6 H(+). The key enzymatic reactions in nitrogen fixation are catalyzed by the nitrogenase complex, which has 2 components: the iron protein and the molybdenum-iron protein. The sequence is that of Nitrogenase iron protein from Stutzerimonas stutzeri (strain A1501) (Pseudomonas stutzeri).